The sequence spans 216 residues: Thiosulfate dehydrogenase electron acceptor (216 aa).

The N-terminal stretch at methionine 1–alanine 22 is a signal peptide. Cytochrome c domains lie at alanine 23 to proline 108 and serine 118 to glycine 210. 6 residues coordinate heme c: cysteine 41, cysteine 44, histidine 45, cysteine 141, cysteine 144, and histidine 145.

In terms of processing, binds 2 heme c groups covalently per subunit.

In terms of biological role, acts as an electron acceptor for the thiosulfate dehydrogenase TsdA. In Stutzerimonas stutzeri (strain A1501) (Pseudomonas stutzeri), this protein is Thiosulfate dehydrogenase electron acceptor (tsdB).